The sequence spans 405 residues: Acetate kinase (405 aa).

Residue Asn-7 participates in Mg(2+) binding. Residue Lys-14 participates in ATP binding. Arg-99 contributes to the substrate binding site. Catalysis depends on Asp-156, which acts as the Proton donor/acceptor. 215–219 (HLGNG) lines the ATP pocket. Glu-391 contributes to the Mg(2+) binding site.

The protein belongs to the acetokinase family. As to quaternary structure, homodimer. Mg(2+) is required as a cofactor. It depends on Mn(2+) as a cofactor.

The protein localises to the cytoplasm. It carries out the reaction acetate + ATP = acetyl phosphate + ADP. Its pathway is metabolic intermediate biosynthesis; acetyl-CoA biosynthesis; acetyl-CoA from acetate: step 1/2. Catalyzes the formation of acetyl phosphate from acetate and ATP. Can also catalyze the reverse reaction. This chain is Acetate kinase, found in Nostoc sp. (strain PCC 7120 / SAG 25.82 / UTEX 2576).